A 372-amino-acid chain; its full sequence is Protein L-Myc-1a (372 aa).

2 disordered regions span residues 172 to 226 and 243 to 306; these read KVAA…ADPF and NYAA…DDLR. A compositionally biased stretch (acidic residues) spans 187–197; sequence SDDDEDDDEID. A compositionally biased stretch (low complexity) spans 269–284; that stretch reads ESSSAPSSPLSSPATS. The bHLH domain occupies 289–341; that stretch reads STEQRRNFLERKRRDDLRSRFQALREEIPGLSGSSKTSKVAILTQATDYLLQL. Positions 290 to 306 are enriched in basic and acidic residues; the sequence is TEQRRNFLERKRRDDLR. A leucine-zipper region spans residues 341–369; sequence LHSSQRRQAQEKRKLKAKQQQLLRRISAL.

As to quaternary structure, efficient DNA binding requires dimerization with another bHLH protein. Binds DNA as a heterodimer with max. As to expression, uterus.

It localises to the nucleus. This Danio rerio (Zebrafish) protein is Protein L-Myc-1a.